A 769-amino-acid polypeptide reads, in one-letter code: DNA helicase/primase complex-associated protein (769 aa).

The protein belongs to the herpesviridae HEPA family. In terms of assembly, associates with the primase and the helicase to form the helicase-primase complex. Interacts with the origin-binding protein. Interacts with the polymerase catalytic subunit.

The protein resides in the host nucleus. Its function is as follows. Component of the helicase/primase complex. Unwinds the DNA at the replication forks and generates single-stranded DNA for both leading and lagging strand synthesis. The primase synthesizes short RNA primers on the lagging strand that the polymerase presumably elongates using dNTPs. The primase-associated factor has no known catalytic activity in the complex and may serve to facilitate the formation of the replisome by directly interacting with the origin-binding protein and the polymerase. This Gallus gallus (Chicken) protein is DNA helicase/primase complex-associated protein (MDV020).